A 484-amino-acid chain; its full sequence is Chromosomal replication initiator protein DnaA (484 aa).

Positions methionine 1–threonine 73 are domain I, interacts with DnaA modulators. Residues threonine 73–proline 140 form a domain II region. A domain III, AAA+ region region spans residues phenylalanine 141–isoleucine 357. ATP is bound by residues glycine 185, glycine 187, lysine 188, and threonine 189. Residues aspartate 358 to lysine 484 are domain IV, binds dsDNA.

The protein belongs to the DnaA family. Oligomerizes as a right-handed, spiral filament on DNA at oriC.

It is found in the cytoplasm. Plays an essential role in the initiation and regulation of chromosomal replication. ATP-DnaA binds to the origin of replication (oriC) to initiate formation of the DNA replication initiation complex once per cell cycle. Binds the DnaA box (a 9 base pair repeat at the origin) and separates the double-stranded (ds)DNA. Forms a right-handed helical filament on oriC DNA; dsDNA binds to the exterior of the filament while single-stranded (ss)DNA is stabiized in the filament's interior. The ATP-DnaA-oriC complex binds and stabilizes one strand of the AT-rich DNA unwinding element (DUE), permitting loading of DNA polymerase. After initiation quickly degrades to an ADP-DnaA complex that is not apt for DNA replication. Binds acidic phospholipids. The protein is Chromosomal replication initiator protein DnaA of Borrelia hermsii (strain HS1 / DAH).